Consider the following 201-residue polypeptide: MSRYRGPRFKKIRRLGALPGLTNKRPRAGSDLRNQSRSGKKSQYRIRLEEKQKLRFHYGLTERQLLKYVRIAGKAKGSTGQVLLQLLEMRLDNILFRLGMATTIPGARQLVNHRHILVNGRIVDIPSYRCKPRDIITARDEQNSRALIQNSFNSPSQDEMPKHLTLQPFQYKGLVNQIIDSKWVGLKINELLVVEYYSRQT.

A disordered region spans residues 15-44 (LGALPGLTNKRPRAGSDLRNQSRSGKKSQY). An S4 RNA-binding domain is found at 89–149 (MRLDNILFRL…DEQNSRALIQ (61 aa)).

It belongs to the universal ribosomal protein uS4 family. In terms of assembly, part of the 30S ribosomal subunit. Contacts protein S5. The interaction surface between S4 and S5 is involved in control of translational fidelity.

Its subcellular location is the plastid. It is found in the chloroplast. Its function is as follows. One of the primary rRNA binding proteins, it binds directly to 16S rRNA where it nucleates assembly of the body of the 30S subunit. Functionally, with S5 and S12 plays an important role in translational accuracy. The chain is Small ribosomal subunit protein uS4c (rps4) from Daucus carota (Wild carrot).